Consider the following 460-residue polypeptide: Flavonol 3-O-glucosyltransferase (460 aa).

Histidine 23 (proton acceptor) is an active-site residue. An anthocyanidin contacts are provided by histidine 23 and glutamine 88. Catalysis depends on aspartate 123, which acts as the Charge relay. Threonine 145 lines the UDP-alpha-D-glucose pocket. Histidine 154 is a binding site for an anthocyanidin. Residues alanine 339, glutamine 341, histidine 356, tryptophan 359, asparagine 360, serine 361, and glutamate 364 each contribute to the UDP-alpha-D-glucose site. Glycine 379 is an an anthocyanidin binding site. 2 residues coordinate UDP-alpha-D-glucose: aspartate 380 and glutamine 381.

The protein belongs to the UDP-glycosyltransferase family.

The catalysed reaction is a flavonol + UDP-alpha-D-glucose = a flavonol 3-O-beta-D-glucoside + UDP + H(+). The enzyme catalyses quercetin + UDP-alpha-D-glucose = quercetin 3-O-beta-D-glucoside + UDP + H(+). It participates in flavonoid metabolism. Its function is as follows. Flavonol 3-O-glucosyltransferase that catalyzes the transfer of glucose from UDP-glucose to the 3-OH position of quercetin and kaempferol. Possesses high quercetin 3-O-glucosyltransferase activity in vitro. Catalyzes the glycosylation of anthocyanins from UDP-glucose. Also active in vitro on benzoates and benzoate derivatives. In Arabidopsis thaliana (Mouse-ear cress), this protein is Flavonol 3-O-glucosyltransferase.